The sequence spans 366 residues: L-Ala-D/L-Glu epimerase (366 aa).

3 residues coordinate substrate: Arg-24, Thr-135, and Lys-160. Lys-162 acts as the Proton acceptor; specific for (R)-substrate epimerization in catalysis. The Mg(2+) site is built by Asp-191, Glu-219, and Asp-244. The active-site Proton acceptor; specific for (S)-substrate epimerization is Lys-268. Substrate is bound by residues Ser-296, Ile-298, Asp-321, and Asp-323.

This sequence belongs to the mandelate racemase/muconate lactonizing enzyme family. In terms of assembly, homooctamer; tetramer of dimers. Mg(2+) serves as cofactor.

The enzyme catalyses L-alanyl-L-glutamate = L-alanyl-D-glutamate. It participates in cell wall degradation; peptidoglycan degradation. Catalyzes the epimerization of L-Ala-D-Glu to L-Ala-L-Glu and has probably a role in the metabolism of the murein peptide, of which L-Ala-D-Glu is a component. Is also able to catalyze the reverse reaction and the epimerization of the other Ala-X dipeptides L-Ala-L-Asp, L-Ala-L-Leu, L-Ala-L-Met, and L-Ala-L-Ser. Is not able to epimerize other L-Ala-X dipeptides. Is also active with L-Ser-L-Glu and, oddly, L-Pro-L-Glu, but not with L-Glu-L-Glu, L-Lys-L-Glu, L-Lys-L-Ala, or D-Ala-D-Ala. The protein is L-Ala-D/L-Glu epimerase (ykfB) of Bacillus subtilis (strain 168).